The chain runs to 83 residues: Small ribosomal subunit protein uS17 (83 aa).

The protein belongs to the universal ribosomal protein uS17 family. As to quaternary structure, part of the 30S ribosomal subunit.

One of the primary rRNA binding proteins, it binds specifically to the 5'-end of 16S ribosomal RNA. This is Small ribosomal subunit protein uS17 from Thermodesulfovibrio yellowstonii (strain ATCC 51303 / DSM 11347 / YP87).